Consider the following 214-residue polypeptide: MSQEVAAFKLVLVGDGGTGKTTFVKRHETGEFVNRYNATLGVEVHPLNFATDCGNIRFDVWDTAGQEKFGGLRDGYYINGQCGIIMFDVTSRITYKNVPNWHRDLVRVCENIPIVLCGNKVDVKERKVKAKTITFHRKKNLQYYDISAKSNYNFEKPFLWLARKLAGNPSLEFVATPALRPAETAIDPEVMQAMQKDLEEANAMPLPDEDDADF.

One can recognise a Small GTPase Ran-type domain in the interval 4-168; that stretch reads EVAAFKLVLV…LWLARKLAGN (165 aa). Residue 15-22 participates in GTP binding; sequence DGGTGKTT. Positions 34–42 are switch-I; it reads NRYNATLGV. GTP-binding positions include Gly-65, 119–122, and 147–149; these read NKVD and SAK. The interval 65–81 is switch-II; sequence GQEKFGGLRDGYYINGQ.

Belongs to the small GTPase superfamily. Ran family. As to quaternary structure, found in a nuclear export complex with RanGTP, exportin and pre-miRNA.

The protein localises to the nucleus. Its function is as follows. GTP-binding protein involved in nucleocytoplasmic transport. Required for the import of protein into the nucleus and also for RNA export. Involved in chromatin condensation and control of cell cycle. The polypeptide is GTP-binding nuclear protein GSP1/Ran (GSP1) (Yarrowia lipolytica (strain CLIB 122 / E 150) (Yeast)).